The following is a 571-amino-acid chain: Leiomodin-3 (571 aa).

Disordered stretches follow at residues 1-29 (MSGH…NLSP), 46-67 (PHLP…GNFN), and 91-228 (PVSF…AKLD). Over residues 10-23 (QEDTLSEELDEDEL) the composition is skewed to acidic residues. A compositionally biased stretch (polar residues) spans 94–105 (FVQSEKNTQNQR). Residues 119-134 (LKEKLNSEILAKKRES) show a composition bias toward basic and acidic residues. Acidic residues predominate over residues 142–179 (EAEDDDEDEEEEEEDDEDEEEEEEDEEDDEGEEDEDGE). Residues 180 to 192 (QANREKNDAKEQI) show a composition bias toward basic and acidic residues. Positions 193 to 204 (HNNPGTYQQLAT) are enriched in polar residues. Residues 206-228 (TAHEQKDTSETKEKGEKKIAKLD) show a composition bias toward basic and acidic residues. A coiled-coil region spans residues 397-436 (VTNLLTRNQDKRRQKRQEEQQQQQLKEQRKLIAMLENGLG). Residues 545–564 (PRDQLLNDIRHSNVAYLKPV) enclose the WH2 domain.

This sequence belongs to the tropomodulin family. In terms of assembly, may interact with tropomyosin alpha (TPM1/2) N-terminus. Interacts with KLHL40; leading to stabilization. Ubiquitinated, leading to its degradation. Interaction with KLHL40 negatively regulates ubiquitination and degradation. Skeletal muscle and heart-specific (at protein level).

Its subcellular location is the cytoplasm. The protein resides in the myofibril. It localises to the sarcomere. The protein localises to the a band. It is found in the m line. Its subcellular location is the cytoskeleton. Functionally, essential for the organization of sarcomeric actin thin filaments in skeletal muscle. Increases the rate of actin polymerization. This Mus musculus (Mouse) protein is Leiomodin-3.